The sequence spans 479 residues: Cysteine--tRNA ligase (479 aa).

Residue C29 coordinates Zn(2+). A 'HIGH' region motif is present at residues 31-41 (ATVQGAPHIGH). Residues 171-197 (QRVEDMQDAPDADPRGKRDPRDFALWK) form a disordered region. A compositionally biased stretch (basic and acidic residues) spans 182 to 197 (ADPRGKRDPRDFALWK). Residues C224, H249, and E253 each coordinate Zn(2+). The 'KMSKS' region signature appears at 280 to 284 (KMSKS). An ATP-binding site is contributed by K283.

Belongs to the class-I aminoacyl-tRNA synthetase family. As to quaternary structure, monomer. It depends on Zn(2+) as a cofactor.

The protein resides in the cytoplasm. It carries out the reaction tRNA(Cys) + L-cysteine + ATP = L-cysteinyl-tRNA(Cys) + AMP + diphosphate. This is Cysteine--tRNA ligase from Kocuria rhizophila (strain ATCC 9341 / DSM 348 / NBRC 103217 / DC2201).